The primary structure comprises 182 residues: Ribosome maturation factor RimM (182 aa).

One can recognise a PRC barrel domain in the interval 102–182; that stretch reads EEGDYYWKDL…SIEVDWDPGF (81 aa).

Belongs to the RimM family. As to quaternary structure, binds ribosomal protein uS19.

It localises to the cytoplasm. In terms of biological role, an accessory protein needed during the final step in the assembly of 30S ribosomal subunit, possibly for assembly of the head region. Essential for efficient processing of 16S rRNA. May be needed both before and after RbfA during the maturation of 16S rRNA. It has affinity for free ribosomal 30S subunits but not for 70S ribosomes. This is Ribosome maturation factor RimM from Escherichia fergusonii (strain ATCC 35469 / DSM 13698 / CCUG 18766 / IAM 14443 / JCM 21226 / LMG 7866 / NBRC 102419 / NCTC 12128 / CDC 0568-73).